A 400-amino-acid chain; its full sequence is Exodeoxyribonuclease 7 large subunit (400 aa).

The protein belongs to the XseA family. As to quaternary structure, heterooligomer composed of large and small subunits.

It localises to the cytoplasm. It catalyses the reaction Exonucleolytic cleavage in either 5'- to 3'- or 3'- to 5'-direction to yield nucleoside 5'-phosphates.. Functionally, bidirectionally degrades single-stranded DNA into large acid-insoluble oligonucleotides, which are then degraded further into small acid-soluble oligonucleotides. In Clostridium novyi (strain NT), this protein is Exodeoxyribonuclease 7 large subunit.